The chain runs to 441 residues: NADH-quinone oxidoreductase subunit D 1 (441 aa).

This sequence belongs to the complex I 49 kDa subunit family. NDH-1 is composed of 14 different subunits. Subunits NuoB, C, D, E, F, and G constitute the peripheral sector of the complex.

Its subcellular location is the cell membrane. The catalysed reaction is a quinone + NADH + 5 H(+)(in) = a quinol + NAD(+) + 4 H(+)(out). Functionally, NDH-1 shuttles electrons from NADH, via FMN and iron-sulfur (Fe-S) centers, to quinones in the respiratory chain. The immediate electron acceptor for the enzyme in this species is believed to be a menaquinone. Couples the redox reaction to proton translocation (for every two electrons transferred, four hydrogen ions are translocated across the cytoplasmic membrane), and thus conserves the redox energy in a proton gradient. This is NADH-quinone oxidoreductase subunit D 1 from Salinispora tropica (strain ATCC BAA-916 / DSM 44818 / JCM 13857 / NBRC 105044 / CNB-440).